We begin with the raw amino-acid sequence, 479 residues long: Aspartyl/glutamyl-tRNA(Asn/Gln) amidotransferase subunit B (479 aa).

Belongs to the GatB/GatE family. GatB subfamily. Heterotrimer of A, B and C subunits.

The enzyme catalyses L-glutamyl-tRNA(Gln) + L-glutamine + ATP + H2O = L-glutaminyl-tRNA(Gln) + L-glutamate + ADP + phosphate + H(+). The catalysed reaction is L-aspartyl-tRNA(Asn) + L-glutamine + ATP + H2O = L-asparaginyl-tRNA(Asn) + L-glutamate + ADP + phosphate + 2 H(+). Allows the formation of correctly charged Asn-tRNA(Asn) or Gln-tRNA(Gln) through the transamidation of misacylated Asp-tRNA(Asn) or Glu-tRNA(Gln) in organisms which lack either or both of asparaginyl-tRNA or glutaminyl-tRNA synthetases. The reaction takes place in the presence of glutamine and ATP through an activated phospho-Asp-tRNA(Asn) or phospho-Glu-tRNA(Gln). The chain is Aspartyl/glutamyl-tRNA(Asn/Gln) amidotransferase subunit B from Streptococcus equi subsp. zooepidemicus (strain MGCS10565).